The following is a 330-amino-acid chain: Phenylalanine--tRNA ligase alpha subunit (330 aa).

Glu-254 serves as a coordination point for Mg(2+).

The protein belongs to the class-II aminoacyl-tRNA synthetase family. Phe-tRNA synthetase alpha subunit type 1 subfamily. As to quaternary structure, tetramer of two alpha and two beta subunits. Mg(2+) serves as cofactor.

The protein localises to the cytoplasm. It catalyses the reaction tRNA(Phe) + L-phenylalanine + ATP = L-phenylalanyl-tRNA(Phe) + AMP + diphosphate + H(+). The sequence is that of Phenylalanine--tRNA ligase alpha subunit (pheS) from Neisseria meningitidis serogroup B (strain ATCC BAA-335 / MC58).